The following is a 382-amino-acid chain: Putative glutamate--cysteine ligase 2-1 (382 aa).

This sequence belongs to the glutamate--cysteine ligase type 2 family. YbdK subfamily.

It carries out the reaction L-cysteine + L-glutamate + ATP = gamma-L-glutamyl-L-cysteine + ADP + phosphate + H(+). Its function is as follows. ATP-dependent carboxylate-amine ligase which exhibits weak glutamate--cysteine ligase activity. This is Putative glutamate--cysteine ligase 2-1 from Frankia casuarinae (strain DSM 45818 / CECT 9043 / HFP020203 / CcI3).